Consider the following 557-residue polypeptide: Phosphoacetylglucosamine mutase (557 aa).

The active-site Phosphoserine intermediate is the Ser67. Mg(2+)-binding residues include Ser67, Asp298, Asp300, and Asp302. Phosphoserine is present on Ser67. Substrate is bound by residues 395-397 (EAN), 522-526 (RASGT), and Arg531.

The protein belongs to the phosphohexose mutase family. Requires Mg(2+) as cofactor.

Its subcellular location is the cytoplasm. The protein localises to the nucleus. It catalyses the reaction N-acetyl-alpha-D-glucosamine 1-phosphate = N-acetyl-D-glucosamine 6-phosphate. Its pathway is nucleotide-sugar biosynthesis; UDP-N-acetyl-alpha-D-glucosamine biosynthesis; N-acetyl-alpha-D-glucosamine 1-phosphate from alpha-D-glucosamine 6-phosphate (route I): step 2/2. Catalyzes the conversion of GlcNAc-6-P into GlcNAc-1-P during the synthesis of uridine diphosphate/UDP-GlcNAc, which is a biosynthetic precursor of chitin and also supplies the amino sugars for N-linked oligosaccharides of glycoproteins. Also has phosphoglucomutase activity. This chain is Phosphoacetylglucosamine mutase, found in Saccharomyces cerevisiae (strain ATCC 204508 / S288c) (Baker's yeast).